A 281-amino-acid chain; its full sequence is Pantothenate synthetase (281 aa).

31–38 is an ATP binding site; sequence MGNLHAGH. The active-site Proton donor is His38. Gln62 is a binding site for (R)-pantoate. Gln62 contacts beta-alanine. 150-153 serves as a coordination point for ATP; sequence GKKD. Gln156 is a binding site for (R)-pantoate. Residues Val179 and 187–190 each bind ATP; that span reads MSSR.

Belongs to the pantothenate synthetase family. Homodimer.

It localises to the cytoplasm. It carries out the reaction (R)-pantoate + beta-alanine + ATP = (R)-pantothenate + AMP + diphosphate + H(+). It participates in cofactor biosynthesis; (R)-pantothenate biosynthesis; (R)-pantothenate from (R)-pantoate and beta-alanine: step 1/1. In terms of biological role, catalyzes the condensation of pantoate with beta-alanine in an ATP-dependent reaction via a pantoyl-adenylate intermediate. The protein is Pantothenate synthetase of Xylella fastidiosa (strain M23).